Here is a 115-residue protein sequence, read N- to C-terminus: U3-lycotoxin-Ls1u (115 aa).

Residues 1 to 20 form the signal peptide; that stretch reads MKFVLLFGVLLVTLFSYSSA. Positions 21-44 are excised as a propeptide; it reads EMLDDFDQADEDELLSLIEKEEAR. 3 disulfides stabilise this stretch: cysteine 48–cysteine 63, cysteine 55–cysteine 72, and cysteine 62–cysteine 87.

This sequence belongs to the neurotoxin 19 (CSTX) family. 01 subfamily. As to expression, expressed by the venom gland.

The protein resides in the secreted. In Lycosa singoriensis (Wolf spider), this protein is U3-lycotoxin-Ls1u.